We begin with the raw amino-acid sequence, 1120 residues long: MSKYSLLFNQGTKDGTNASSGSEANSANITSSSAPASSTNTSSPTSSESAVVSPPASTSPRRRLIHRRHGSAGAAEVAPLSLPKRPQQPNEEKHENFISDSVHHCSNRGASGSELKALTTSGSETVMSASPDIAFEAPSPPTASASPPLESTSAVESDGDVVIDDMMRYQEGDSGGSRSATSAAAAGRAVSTNDAAALINGDPGPLSSAVSSSSSGSPHTPPRLFTCDMCLQYVSTSYEALEQHALDQHGDALADYTRLRSVAEKLVPVWDEVLKRKASVVQQWGKRIFAVAVQRDAGAEKMAEAHRARAQLELVVQRWHPRAKVFIFGSSVAFGVWDGISDIDFTVVDVDELEAGTWPPSEKNAVRSITELLRRAGFSFINLEPISHARVPIIKHHASLPIRLTDEQRHRLYEEARQSAAAVDLVAAESLASSSPSSAQETTDEKGLTQLEAELIIARSVRYSLNLPAGPPDSAILEASIRLAVGSAAVQQVWWNRTRDMCCMTFDTTTNAVKASTCPLHFMSAGMRARVQPLHEECRPELYGMDFDLSFRAFGIRNSHLLRRYLLSHPCARPGALVLKDWSKTSGVNNSVNGYLTSYAINIMWIYYLVHRGVIRYVCPARDIPASLRCNVDADPQYAAMVDPTWTPEERAAMEAQAGELLLGFFYYYAFEFDWVNHVVSLNRPGITTKASLGWDVEDVAQTGSPAPHFGVAGSQHQYNLAGAEGQQGDLHSGTSLSAPQTRPLTGYDGMMASSASAAARRSRATTRYSFCIEDPYEENLNLGRHMGVTKTLRVQTELYRGLLSLLKDDPQHCCVFAGSTNSSGSTDSNGAMASGAAEPAMVAARTPSEPTELPVRVLYKLMAISTRELAIARRRYSATVTAGTEFPGALLSDLEAAFLAQAPTEWKLARQVWNKHQLLHRLGLKLHAREYVLPRREVGVRRLAAKAPPGVVPASAPEPTFTAEEVAAAAAESGQAPFSAEHAPTSSEEVTQMNRAFLGAFPARRLPEDLMLAMTKGYSCLTPSWVAWSKPWAALSAWWTDRLHSPSTTTQGEDPLASGTCEQGGVSPSLPTGAPHHISAVPEKSAGAMHQTRTQLRRHVVAEIASTPAARRVLRLLFR.

Disordered stretches follow at residues 1–156 (MSKY…SAVE) and 196–221 (AALINGDPGPLSSAVSSSSSGSPHTP). Residues 7–16 (LFNQGTKDGT) show a composition bias toward polar residues. Residues 17-59 (NASSGSEANSANITSSSAPASSTNTSSPTSSESAVVSPPASTS) show a composition bias toward low complexity. Residues 60–70 (PRRRLIHRRHG) are compositionally biased toward basic residues. Basic and acidic residues predominate over residues 90-103 (NEEKHENFISDSVH). The span at 118–128 (LTTSGSETVMS) shows a compositional bias: polar residues. Low complexity-rich tracts occupy residues 134–154 (AFEAPSPPTASASPPLESTSA) and 207–217 (SSAVSSSSSGS). A C2H2-type; atypical zinc finger spans residues 222–253 (PRLFTCDMCLQYVSTSYEALEQHALDQHGDAL). 4 residues coordinate Zn(2+): Cys-227, Cys-230, His-244, and His-249. Residues Ser-330 and 341-344 (SDID) each bind UTP. Asp-342 and Asp-344 together coordinate Mg(2+). Arg-390 lines the RNA pocket. Asp-548 lines the Mg(2+) pocket. UTP contacts are provided by residues 555–559 (GIRNS), Lys-580, Lys-584, and 598–599 (SY). The PAP-associated domain occupies 659–697 (GELLLGFFYYYAFEFDWVNHVVSLNRPGITTKASLGWDV). The tract at residues 750–1120 (GMMASSASAA…ARRVLRLLFR (371 aa)) is important for catalytic activity and RNA binding. A Nucleotide recognition motif (NRM) motif is present at residues 773–782 (IEDPYEENLN). Positions 800–900 (YRGLLSLLKD…LLSDLEAAFL (101 aa)) are involved in oligomerization. The segment at 1047–1076 (PSTTTQGEDPLASGTCEQGGVSPSLPTGAP) is disordered.

It belongs to the DNA polymerase type-B-like family. In terms of assembly, homotetramer. Part of a 700kDa complex. Interacts with p45 and p50 RNA ligases. The cofactor is Mg(2+). Requires Mn(2+) as cofactor.

The protein resides in the mitochondrion. It catalyses the reaction RNA(n) + UTP = RNA(n)-3'-uridine ribonucleotide + diphosphate. Its activity is regulated as follows. Zinc-binding is required for catalytic activity. Functionally, terminal uridylyltransferase which is involved in the post-transcriptional editing of mitochondrial RNA, a process involving the addition and deletion of uridine (U) nucleotides in the pre-mRNA. Specifically, catalyzes the addition of Us to the 3'-hydroxyl group of guided RNA (gRNA), with a preference for RNAs terminating in 6 Us, but also can add Us to RNAs terminating in 6 adenines (A), 6 cytosines (C), or 6 guanines (G). Can mediate RNA-independent UTP polymerization in vitro. Can mediate pyrophosphate-dependent degradation of synthetic RNA ending with U residues in vitro. The sequence is that of Terminal uridylyltransferase 1 from Leishmania tarentolae (Sauroleishmania tarentolae).